A 449-amino-acid polypeptide reads, in one-letter code: Type 3 secretion system ATPase (449 aa).

178 to 183 lines the ATP pocket; that stretch reads GCGKTT.

The protein belongs to the ATPase alpha/beta chains family. T3SS ATPase subfamily. As to quaternary structure, the core secretion machinery of the T3SS is composed of approximately 20 different proteins, including cytoplasmic components, a base, an export apparatus and a needle. This subunit is part of the cytosolic complex. Forms homododecamers. Comprises two hexameric rings that are probably stacked face-to-face by the association of their C-terminal domains. Also present as monomer and homohexamer in solution.

It localises to the cytoplasm. The enzyme catalyses ATP + H2O + cellular proteinSide 1 = ADP + phosphate + cellular proteinSide 2.. Oligomerization increases ATPase activity. Its function is as follows. ATPase component of the type III secretion system (T3SS), also called injectisome, which is used to inject bacterial effector proteins into eukaryotic host cells. Acts as a molecular motor to provide the energy that is required for the export of proteins. Required for type III secretion apparatus (T3SA) formation, proper protein secretion, host cell invasion and virulence. May play a critical role in T3SS substrate recognition, disassembly of the effector/chaperone complex and unfolding of the effector in an ATP-dependent manner prior to secretion. In Pseudomonas savastanoi pv. phaseolicola (Pseudomonas syringae pv. phaseolicola), this protein is Type 3 secretion system ATPase.